The primary structure comprises 521 residues: Zinc finger CCCH domain-containing protein 45 (521 aa).

3 disordered regions span residues 28-60 (TEDSPANVASQPQRHSYPSRKPRGPDLPPGFEG), 142-185 (TPAI…PLCS), and 296-319 (SRSFTNPERRVSPPKPVNGSISPP). A compositionally biased stretch (polar residues) spans 34-43 (NVASQPQRHS). Low complexity predominate over residues 159–168 (EESSNSKVES). A compositionally biased stretch (polar residues) spans 170–185 (VTANKQGQLETKPLCS). Residues 469-497 (NKIHQQCIYFGTANGCNMGDSCTYVHDRY) form a C3H1-type zinc finger.

The polypeptide is Zinc finger CCCH domain-containing protein 45 (Arabidopsis thaliana (Mouse-ear cress)).